The chain runs to 362 residues: Methionine import ATP-binding protein MetN (362 aa).

Positions 23 to 258 (VRLTDVKRRF…PQAEITGSLL (236 aa)) constitute an ABC transporter domain. An ATP-binding site is contributed by 55–62 (GRSGAGKS).

This sequence belongs to the ABC transporter superfamily. Methionine importer (TC 3.A.1.24) family. The complex is composed of two ATP-binding proteins (MetN), two transmembrane proteins (MetI) and a solute-binding protein (MetQ).

Its subcellular location is the cell inner membrane. The enzyme catalyses L-methionine(out) + ATP + H2O = L-methionine(in) + ADP + phosphate + H(+). It carries out the reaction D-methionine(out) + ATP + H2O = D-methionine(in) + ADP + phosphate + H(+). In terms of biological role, part of the ABC transporter complex MetNIQ involved in methionine import. Responsible for energy coupling to the transport system. This is Methionine import ATP-binding protein MetN from Rhizobium johnstonii (strain DSM 114642 / LMG 32736 / 3841) (Rhizobium leguminosarum bv. viciae).